A 61-amino-acid polypeptide reads, in one-letter code: Metallothionein-1B (61 aa).

The segment at 1–29 is beta; sequence MDPNCSCVAGESCTCAGSCKCKQCRCASC. Residues Cys5, Cys7, Cys13, Cys15, Cys19, Cys21, Cys24, Cys26, Cys29, Cys33, Cys34, Cys36, Cys37, Cys41, Cys44, Cys48, Cys50, Cys57, Cys59, and Cys60 each contribute to the a divalent metal cation site. The tract at residues 30–61 is alpha; the sequence is KKSCCSCCPVGCAKCAQGCVCKGASDKCSCCA.

Belongs to the metallothionein superfamily. Type 1 family.

Functionally, metallothioneins have a high content of cysteine residues that bind various heavy metals; these proteins are transcriptionally regulated by both heavy metals and glucocorticoids. The sequence is that of Metallothionein-1B from Equus caballus (Horse).